A 691-amino-acid chain; its full sequence is Solute carrier family 28 member 3 (691 aa).

The segment at 1–78 is disordered; it reads MELRSTAAPR…HMEDDDEEMQ (78 aa). Topologically, residues 1–102 are cytoplasmic; sequence MELRSTAAPR…FCRKHKTTLR (102 aa). A compositionally biased stretch (low complexity) spans 21-30; sequence NEENFLENEN. Over residues 31-42 the composition is skewed to polar residues; the sequence is TSGNNSIRSRAV. Residues 43–54 are compositionally biased toward basic and acidic residues; the sequence is QSREHTNTKQDE. Residues 103–123 traverse the membrane as a helical segment; that stretch reads HIIWGILLAGYLVMVISACVL. The Extracellular portion of the chain corresponds to 124–128; that stretch reads NFHRA. Residues 129–149 form a helical membrane-spanning segment; that stretch reads LPLFVITVAAIFFVVWDHLMA. Topologically, residues 150–173 are cytoplasmic; sequence KYEHRIDEMLSPGRRLLNSHWFWL. A helical transmembrane segment spans residues 174-194; that stretch reads KWVIWSSLVLAVIFWLAFDTA. Over 195 to 197 the chain is Extracellular; the sequence is KLG. A helical transmembrane segment spans residues 198 to 219; the sequence is QQQLVSFGGLIMYIVLLFLFSK. At 220-227 the chain is on the cytoplasmic side; it reads YPTRVYWR. Residues 228-247 form a helical membrane-spanning segment; the sequence is PVLWGIGLQFLLGLLILRTD. Over 248–284 the chain is Extracellular; it reads PGFIAFDWLGRQVQTFLEYTDAGASFVFGEKYKDHFF. The helical transmembrane segment at 285 to 305 threads the bilayer; the sequence is AFKVLPIVVFFSTVMSMLYYL. The Cytoplasmic portion of the chain corresponds to 306-329; sequence GLMQWIIRKVGWIMLVTTGSSPIE. Residues 330–348 constitute an intramembrane region (helical); the sequence is SVVASGNIFVGQTESPLLV. The Cytoplasmic portion of the chain corresponds to 349 to 361; the sequence is RPYLPYITKSELH. The helical transmembrane segment at 362 to 384 threads the bilayer; it reads AIMTAGFSTIAGSVLGAYISFGV. Over 385-386 the chain is Extracellular; sequence PS. Residues 387 to 408 form a helical membrane-spanning segment; that stretch reads SHLLTASVMSAPASLAAAKLFW. At 409–443 the chain is on the cytoplasmic side; that stretch reads PETEKPKITLKNAMKMESGDSGNLLEAATQGASSS. The chain crosses the membrane as a helical span at residues 444 to 469; it reads ISLVANIAVNLIAFLALLSFMNSALS. The Extracellular segment spans residues 470-507; that stretch reads WFGNMFDYPQLSFELICSYIFMPFSFMMGVEWQDSFMV. The segment at residues 508 to 527 is an intramembrane region (helical); it reads ARLIGYKTFFNEFVAYEHLS. The Extracellular portion of the chain corresponds to 528 to 566; the sequence is KWIHLRKEGGPKFVNGVQQYISIRSEIIATYALCGFANI. Residues 567–577 traverse the membrane as a helical segment; that stretch reads GSLGIVIGGLT. Topologically, residues 578 to 590 are cytoplasmic; that stretch reads SMAPSRKRDIASG. A helical transmembrane segment spans residues 591 to 613; sequence AVRALIAGTVACFMTACIAGILS. Over 614 to 691 the chain is Extracellular; that stretch reads STPVDINCHH…FNCNGISNTF (78 aa).

Belongs to the concentrative nucleoside transporter (CNT) (TC 2.A.41) family. As to quaternary structure, homotrimer. As to expression, expressed in pancreas, bone marrow, trachea, mammary gland, liver, prostate, and regions of intestine, brain, lung, placenta, testis, kidney, and heart.

Its subcellular location is the cell membrane. The protein resides in the endoplasmic reticulum membrane. It carries out the reaction thymidine(out) + 2 Na(+)(out) = thymidine(in) + 2 Na(+)(in). It catalyses the reaction cytidine(out) + 2 Na(+)(out) = cytidine(in) + 2 Na(+)(in). The catalysed reaction is uridine(out) + 2 Na(+)(out) = uridine(in) + 2 Na(+)(in). The enzyme catalyses adenosine(out) + 2 Na(+)(out) = adenosine(in) + 2 Na(+)(in). It carries out the reaction guanosine(out) + 2 Na(+)(out) = guanosine(in) + 2 Na(+)(in). It catalyses the reaction inosine(out) + 2 Na(+)(out) = inosine(in) + 2 Na(+)(in). In terms of biological role, sodium-dependent, pyrimidine- and purine-selective. Involved in the homeostasis of endogenous nucleosides. Exhibits the transport characteristics of the nucleoside transport system cib or N3 subtype (N3/cib) (with marked transport of both thymidine and inosine). Employs a 2:1 sodium/nucleoside ratio. Transports uridine. Also able to transport gemcitabine, 3'-azido-3'-deoxythymidine (AZT), ribavirin and 3-deazauridine. This chain is Solute carrier family 28 member 3 (SLC28A3), found in Homo sapiens (Human).